Consider the following 123-residue polypeptide: Small ribosomal subunit protein uS13 (123 aa).

The interval 97 to 123 (PVRGQRTHTNAKTRKGRSKLPVAAKKK) is disordered.

It belongs to the universal ribosomal protein uS13 family. Part of the 30S ribosomal subunit. Forms a loose heterodimer with protein S19. Forms two bridges to the 50S subunit in the 70S ribosome.

Its function is as follows. Located at the top of the head of the 30S subunit, it contacts several helices of the 16S rRNA. In the 70S ribosome it contacts the 23S rRNA (bridge B1a) and protein L5 of the 50S subunit (bridge B1b), connecting the 2 subunits; these bridges are implicated in subunit movement. Contacts the tRNAs in the A and P-sites. The protein is Small ribosomal subunit protein uS13 of Ehrlichia canis (strain Jake).